We begin with the raw amino-acid sequence, 116 residues long: Flagellar transcriptional regulator FlhD (116 aa).

Belongs to the FlhD family. In terms of assembly, homodimer; disulfide-linked. Forms a heterohexamer composed of two FlhC and four FlhD subunits. Each FlhC binds a FlhD dimer, forming a heterotrimer, and a hexamer assembles by dimerization of two heterotrimers.

The protein localises to the cytoplasm. Functions in complex with FlhC as a master transcriptional regulator that regulates transcription of several flagellar and non-flagellar operons by binding to their promoter region. Activates expression of class 2 flagellar genes, including fliA, which is a flagellum-specific sigma factor that turns on the class 3 genes. Also regulates genes whose products function in a variety of physiological pathways. The chain is Flagellar transcriptional regulator FlhD from Enterobacter sp. (strain 22).